Reading from the N-terminus, the 277-residue chain is NADPH-dependent 7-cyano-7-deazaguanine reductase (277 aa).

83 to 85 serves as a coordination point for substrate; it reads IES. An NADPH-binding site is contributed by 85-86; it reads SK. The Thioimide intermediate role is filled by Cys-184. Catalysis depends on Asp-191, which acts as the Proton donor. 223-224 serves as a coordination point for substrate; sequence HE. 252 to 253 provides a ligand contact to NADPH; it reads RG.

Belongs to the GTP cyclohydrolase I family. QueF type 2 subfamily. As to quaternary structure, homodimer.

The protein localises to the cytoplasm. The enzyme catalyses 7-aminomethyl-7-carbaguanine + 2 NADP(+) = 7-cyano-7-deazaguanine + 2 NADPH + 3 H(+). Its pathway is tRNA modification; tRNA-queuosine biosynthesis. Catalyzes the NADPH-dependent reduction of 7-cyano-7-deazaguanine (preQ0) to 7-aminomethyl-7-deazaguanine (preQ1). This Cupriavidus necator (strain ATCC 17699 / DSM 428 / KCTC 22496 / NCIMB 10442 / H16 / Stanier 337) (Ralstonia eutropha) protein is NADPH-dependent 7-cyano-7-deazaguanine reductase.